A 333-amino-acid polypeptide reads, in one-letter code: Bacteriocin helveticin-J (333 aa).

In terms of biological role, this heat-sensitive bacteriocin inhibits the growth of closely related Lactobacillus species. The polypeptide is Bacteriocin helveticin-J (hlv) (Lactobacillus helveticus (Lactobacillus suntoryeus)).